Here is a 400-residue protein sequence, read N- to C-terminus: Subtilisin-like protease 11 (400 aa).

Residues M1–A19 form the signal peptide. The propeptide occupies A20–D117. One can recognise an Inhibitor I9 domain in the interval S35 to I116. The Peptidase S8 domain maps to S127–Q400. N-linked (GlcNAc...) asparagine glycosylation occurs at N138. Residues D159 and H191 each act as charge relay system in the active site. 3 N-linked (GlcNAc...) asparagine glycosylation sites follow: N252, N336, and N337. S346 acts as the Charge relay system in catalysis. N388 and N396 each carry an N-linked (GlcNAc...) asparagine glycan.

This sequence belongs to the peptidase S8 family.

It localises to the secreted. Its function is as follows. Secreted subtilisin-like serine protease with keratinolytic activity that contributes to pathogenicity. The polypeptide is Subtilisin-like protease 11 (SUB11) (Arthroderma gypseum (strain ATCC MYA-4604 / CBS 118893) (Microsporum gypseum)).